The primary structure comprises 102 residues: NADH-quinone oxidoreductase subunit K (102 aa).

Transmembrane regions (helical) follow at residues 6 to 26, 30 to 50, and 62 to 82; these read MEHG…GLMV, ILFI…AFVV, and VMFI…LAIL.

Belongs to the complex I subunit 4L family. In terms of assembly, NDH-1 is composed of 13 different subunits. Subunits NuoA, H, J, K, L, M, N constitute the membrane sector of the complex.

Its subcellular location is the cell inner membrane. It catalyses the reaction a quinone + NADH + 5 H(+)(in) = a quinol + NAD(+) + 4 H(+)(out). Its function is as follows. NDH-1 shuttles electrons from NADH, via FMN and iron-sulfur (Fe-S) centers, to quinones in the respiratory chain. The immediate electron acceptor for the enzyme in this species is believed to be ubiquinone. Couples the redox reaction to proton translocation (for every two electrons transferred, four hydrogen ions are translocated across the cytoplasmic membrane), and thus conserves the redox energy in a proton gradient. In Ectopseudomonas mendocina (strain ymp) (Pseudomonas mendocina), this protein is NADH-quinone oxidoreductase subunit K.